The sequence spans 864 residues: Mitochondrial 15S rRNA processing factor CCM1 (864 aa).

The N-terminal 76 residues, 1-76, are a transit peptide targeting the mitochondrion; that stretch reads MYMARCGPKN…REFSNTLKER (76 aa). Composition is skewed to polar residues over residues 80–94 and 102–112; these read TKSV…NSIA and NVNVTKTSSVP. Residues 80-117 form a disordered region; the sequence is TKSVNSDGHQSNSIAPISEDSRNVNVTKTSSVPNEEKS. 2 PPR repeats span residues 319-353 and 356-390; these read NKQN…STKH and DICT…NIKP.

Belongs to the CCM1 family. As to quaternary structure, binds to mitochondrial small subunit 15S rRNA.

It is found in the mitochondrion. Its function is as follows. Regulates mitochondrial small subunit maturation by controlling 15S rRNA 5'-end processing. Localizes to the 5' precursor of the 15S rRNA in a position that is subsequently occupied by mS47 in the mature yeast mtSSU. Uses structure and sequence-specific RNA recognition, binding to a single-stranded region of the precursor and specifically recognizing bases -6 to -1. The exchange of Ccm1 for mS47 is coupled to the irreversible removal of precursor rRNA that is accompanied by conformational changes of the mitoribosomal proteins uS5m and mS26. These conformational changes signal completion of 5'-end rRNA processing through protection of the mature 5'-end of the 15S rRNA and stabilization of mS47. The removal of the 5' precursor together with the dissociation of Ccm1 may be catalyzed by the 5'-3' exoribonuclease Pet127. Involved in the specific removal of group I introns in mitochondrial encoded transcripts. The sequence is that of Mitochondrial 15S rRNA processing factor CCM1 from Saccharomyces cerevisiae (strain ATCC 204508 / S288c) (Baker's yeast).